We begin with the raw amino-acid sequence, 137 residues long: Proofreading thioesterase EntH (137 aa).

Glu-63 serves as the catalytic Nucleophile or proton acceptor.

This sequence belongs to the thioesterase PaaI family. Homotetramer. Dimer of dimers. Interacts specifically with the aryl carrier protein (ArCP) domain of EntB.

The protein localises to the cytoplasm. Its pathway is siderophore biosynthesis; enterobactin biosynthesis. Required for optimal enterobactin synthesis. Acts as a proofreading enzyme that prevents EntB misacylation by hydrolyzing the thioester bound existing between EntB and wrongly charged molecules. This chain is Proofreading thioesterase EntH, found in Cronobacter sakazakii (strain ATCC BAA-894) (Enterobacter sakazakii).